The chain runs to 333 residues: 1,5-anhydro-D-fructose reductase (333 aa).

NADP(+) contacts are provided by residues 9–12, 33–34, Arg38, 71–76, 93–94, Asn120, 162–163, and Tyr283; these read ASTI, SS, TTNELH, EK, and WR.

Belongs to the Gfo/Idh/MocA family. As to quaternary structure, monomer.

It catalyses the reaction 1,5-anhydro-D-mannitol + NADP(+) = 1,5-anhydro-D-fructose + NADPH + H(+). Functionally, catalyzes the NADPH-specific reduction of 1,5-anhydro-D-fructose to 1,5-anhydro-D-mannitol. The sequence is that of 1,5-anhydro-D-fructose reductase (afr) from Rhizobium meliloti (strain 1021) (Ensifer meliloti).